The sequence spans 185 residues: Somatotropin (185 aa).

A disulfide bridge links C52 with C158. Zn(2+) is bound at residue E167. C175 and C183 are oxidised to a cystine.

This sequence belongs to the somatotropin/prolactin family.

The protein resides in the secreted. In terms of biological role, growth hormone plays an important role in growth control and is involved in the regulation of several anabolic processes. Implicated as an osmoregulatory substance important for seawater adaptation. The polypeptide is Somatotropin (gh) (Katsuwonus pelamis (Skipjack tuna)).